The sequence spans 992 residues: Disks large-associated protein 4 (992 aa).

Positions 1-20 are enriched in basic and acidic residues; the sequence is MKGLGDSRPRHLSDSLDPPH. Disordered stretches follow at residues 1 to 31 and 157 to 225; these read MKGLGDSRPRHLSDSLDPPHEPLFAGPDRNP and MEGT…PASG. A compositionally biased stretch (gly residues) spans 162-171; it reads GKVGGNGSKK. The segment covering 172–194 has biased composition (basic and acidic residues); that stretch reads GGLEDGKGRRAKSKERAKAGEPK. The span at 199–208 shows a compositional bias: polar residues; it reads SNISGWWSSD. Phosphoserine is present on residues serine 206 and serine 207. Arginine 290 bears the Omega-N-methylarginine mark. A disordered region spans residues 342-396; sequence TTLLSPRDMDSTAEGPIPCRRMRSGSYIKAMGDEDSDESGGGSPKPSPKTAARRQ. Phosphoserine occurs at positions 377, 380, 384, 388, 405, 415, and 421. Disordered regions lie at residues 527-751, 763-798, and 915-992; these read SVSL…GPRQ, SYGDNSDPALEASSLPPPDPWLETSSSSPAEPAQPG, and TPEK…QTRL. Residues 528-554 are compositionally biased toward low complexity; that stretch reads VSLQSLSPPPSTGSLSNSRTLPSSSCL. Over residues 576-591 the composition is skewed to polar residues; sequence VTVQSSTESAQDTYLD. A phosphoserine mark is found at serine 580, serine 581, serine 609, serine 611, serine 665, and serine 744. The span at 600–620 shows a compositional bias: low complexity; that stretch reads TSQSGLSNSSDSLDSSTRPPS. At threonine 915 the chain carries Phosphothreonine. Basic and acidic residues-rich tracts occupy residues 915–925 and 940–958; these read TPEKRKEEKKP and VSRDKASDAGDKQRQEARK. Polar residues predominate over residues 969–978; the sequence is VRQNSATESA. Serine 973 carries the post-translational modification Phosphoserine.

Belongs to the SAPAP family. As to quaternary structure, interacts with DLG1 and DLG4/PSD-95.

It localises to the membrane. May play a role in the molecular organization of synapses and neuronal cell signaling. Could be an adapter protein linking ion channel to the subsynaptic cytoskeleton. May induce enrichment of PSD-95/SAP90 at the plasma membrane. The sequence is that of Disks large-associated protein 4 (Dlgap4) from Mus musculus (Mouse).